A 243-amino-acid chain; its full sequence is MRNDLETLKHIIDSSNRITFFTGAGVSVASGVPDFRSMGGLFDEISKDGLSPEYLLSRDYLEDDPEGFINFCHKRLLFVDTKPNIVHDWIAKLERNQQSLGVITQNIDGLHSDAGSQHVDELHGTLNRFYCNACHKSYTKSDVIDRTLKHCDNCGGAIRPDIVLYGEMLDQPTIIRALNKIEHADTLVVLGSSLVVQPAAGLISHFKGDNLIIINKDRTPYDSDATLVIHDDMVSVVKSLMTE.

A Deacetylase sirtuin-type domain is found at 1-243 (MRNDLETLKH…VSVVKSLMTE (243 aa)). NAD(+) is bound by residues Ala24, Phe35, Arg36, Gln105, Ile107, Asp108, and His123. Nicotinamide is bound at residue Phe35. Nicotinamide contacts are provided by Ile107 and Asp108. The Proton acceptor role is filled by His123. Zn(2+) is bound by residues Cys131, Cys134, Cys151, and Cys154. NAD(+) is bound by residues Ser192, Ser193, Asn215, and Asp232.

Belongs to the sirtuin family. Class U subfamily. Zn(2+) is required as a cofactor.

The protein resides in the cytoplasm. The enzyme catalyses N(6)-acetyl-L-lysyl-[protein] + NAD(+) + H2O = 2''-O-acetyl-ADP-D-ribose + nicotinamide + L-lysyl-[protein]. Its function is as follows. NAD-dependent protein deacetylase which modulates the activities of several enzymes which are inactive in their acetylated form. The chain is NAD-dependent protein deacetylase from Staphylococcus aureus (strain Mu50 / ATCC 700699).